The primary structure comprises 198 residues: Armadillo repeat-containing protein 7 (198 aa).

ARM repeat units lie at residues 57 to 99 (QVLD…QAGG) and 100 to 140 (LPLI…TSLP). S169 bears the Phosphoserine mark.

As to quaternary structure, component of the minor spliceosome. Within this complex, interacts with RBM48.

Its function is as follows. As a component of the minor spliceosome, involved in the splicing of U12-type introns in pre-mRNAs. The sequence is that of Armadillo repeat-containing protein 7 (Armc7) from Mus musculus (Mouse).